We begin with the raw amino-acid sequence, 356 residues long: tRNA N6-adenosine threonylcarbamoyltransferase (356 aa).

Fe cation contacts are provided by H110 and H114. Substrate contacts are provided by residues L133–G137, D166, G179, and N276. D304 contributes to the Fe cation binding site.

The protein belongs to the KAE1 / TsaD family. The cofactor is Fe(2+).

Its subcellular location is the cytoplasm. The catalysed reaction is L-threonylcarbamoyladenylate + adenosine(37) in tRNA = N(6)-L-threonylcarbamoyladenosine(37) in tRNA + AMP + H(+). Its function is as follows. Required for the formation of a threonylcarbamoyl group on adenosine at position 37 (t(6)A37) in tRNAs that read codons beginning with adenine. Is involved in the transfer of the threonylcarbamoyl moiety of threonylcarbamoyl-AMP (TC-AMP) to the N6 group of A37, together with TsaE and TsaB. TsaD likely plays a direct catalytic role in this reaction. The sequence is that of tRNA N6-adenosine threonylcarbamoyltransferase from Teredinibacter turnerae (strain ATCC 39867 / T7901).